Consider the following 594-residue polypeptide: Elongation factor 4 (594 aa).

A tr-type G domain is found at 2-184 (KNIRNFSIIA…TIVAKVPAPE (183 aa)). Residues 14 to 19 (DHGKST) and 131 to 134 (NKID) each bind GTP.

It belongs to the TRAFAC class translation factor GTPase superfamily. Classic translation factor GTPase family. LepA subfamily.

Its subcellular location is the cell inner membrane. It carries out the reaction GTP + H2O = GDP + phosphate + H(+). Functionally, required for accurate and efficient protein synthesis under certain stress conditions. May act as a fidelity factor of the translation reaction, by catalyzing a one-codon backward translocation of tRNAs on improperly translocated ribosomes. Back-translocation proceeds from a post-translocation (POST) complex to a pre-translocation (PRE) complex, thus giving elongation factor G a second chance to translocate the tRNAs correctly. Binds to ribosomes in a GTP-dependent manner. The protein is Elongation factor 4 of Francisella tularensis subsp. novicida (strain U112).